A 273-amino-acid polypeptide reads, in one-letter code: Phosphatidylglycerol--prolipoprotein diacylglyceryl transferase (273 aa).

The next 3 helical transmembrane spans lie at 20 to 40, 59 to 79, and 97 to 117; these read LAVRWYALAYMVSFIIALPIA, FLFYAILGVLLGGRLGYVLFY, and GGMSFHGGALGVILALAYFSW. Residue Arg142 coordinates a 1,2-diacyl-sn-glycero-3-phospho-(1'-sn-glycerol). 2 helical membrane passes run 206-226 and 243-263; these read FGFLSGLFLFGYACARSFCEF and MGQLLCIPMALAGMGLMVYAM.

The protein belongs to the Lgt family.

It is found in the cell inner membrane. The enzyme catalyses L-cysteinyl-[prolipoprotein] + a 1,2-diacyl-sn-glycero-3-phospho-(1'-sn-glycerol) = an S-1,2-diacyl-sn-glyceryl-L-cysteinyl-[prolipoprotein] + sn-glycerol 1-phosphate + H(+). The protein operates within protein modification; lipoprotein biosynthesis (diacylglyceryl transfer). Catalyzes the transfer of the diacylglyceryl group from phosphatidylglycerol to the sulfhydryl group of the N-terminal cysteine of a prolipoprotein, the first step in the formation of mature lipoproteins. In Gluconobacter oxydans (strain 621H) (Gluconobacter suboxydans), this protein is Phosphatidylglycerol--prolipoprotein diacylglyceryl transferase.